A 128-amino-acid polypeptide reads, in one-letter code: Flagellar basal body rod protein FlgB (128 aa).

It belongs to the flagella basal body rod proteins family. The basal body constitutes a major portion of the flagellar organelle and consists of a number of rings mounted on a central rod. In Gram-negative bacteria, at least four rings, L, P, S and M are present, whereas Gram-positive bacteria lack the L and P rings. The rod consists of about 26 subunits of FlgG in the distal portion, and FlgB, FlgC and FlgF build up the proximal portion of the rod with about 6 subunits each. Rod assembly occurs by export via the flagellum-specific pathway of its constituent proteins and by their incorporation into the rod structure in the probable order of FlgB, FlgC, FlgF and FlgG. Another protein, FliE, also assembles onto the stable rod structure.

The protein resides in the bacterial flagellum basal body. Its function is as follows. Structural component of flagellum, the bacterial motility apparatus. Part of the rod structure of flagellar basal body. In Cereibacter sphaeroides (Rhodobacter sphaeroides), this protein is Flagellar basal body rod protein FlgB.